A 310-amino-acid chain; its full sequence is Apolipoprotein E (310 aa).

An N-terminal signal peptide occupies residues Met-1–Ser-18. Tandem repeats lie at residues Val-72 to Gly-93, Pro-94 to Gly-115, Ala-116 to Gly-137, Gln-138 to Met-159, Arg-160 to Glu-181, Arg-182 to Ala-203, Asn-204 to Arg-225, and Gly-226 to Glu-247. The 8 X 22 AA approximate tandem repeats stretch occupies residues Val-72–Glu-247. Met-135 carries the methionine sulfoxide modification. The interval His-150–Arg-160 is LDL and other lipoprotein receptors binding. The interval His-150–Arg-160 is LDL receptor binding. Met-154–Arg-157 serves as a coordination point for heparin. A lipid-binding and lipoprotein association region spans residues Thr-202–Met-282. Gly-221–Leu-228 is a binding site for heparin. The segment at Gln-258–Gln-310 is homooligomerization. Residues Arg-270–Met-282 are specificity for association with VLDL.

This sequence belongs to the apolipoprotein A1/A4/E family. In terms of assembly, homotetramer. May interact with ABCA1; functionally associated with ABCA1 in the biogenesis of HDLs. May interact with APP/A4 amyloid-beta peptide; the interaction is extremely stable in vitro but its physiological significance is unclear. May interact with MAPT. May interact with MAP2. In the cerebrospinal fluid, interacts with secreted SORL1. Interacts with PMEL; this allows the loading of PMEL luminal fragment on ILVs to induce fibril nucleation. APOE exists as multiple glycosylated and sialylated glycoforms within cells and in plasma. The extent of glycosylation and sialylation are tissue and context specific. In terms of processing, glycated in plasma VLDL. Post-translationally, phosphorylated by FAM20C in the extracellular medium.

It is found in the secreted. The protein resides in the extracellular space. Its subcellular location is the extracellular matrix. It localises to the extracellular vesicle. The protein localises to the endosome. It is found in the multivesicular body. Its function is as follows. APOE is an apolipoprotein, a protein associating with lipid particles, that mainly functions in lipoprotein-mediated lipid transport between organs via the plasma and interstitial fluids. APOE is a core component of plasma lipoproteins and is involved in their production, conversion and clearance. Apolipoproteins are amphipathic molecules that interact both with lipids of the lipoprotein particle core and the aqueous environment of the plasma. As such, APOE associates with chylomicrons, chylomicron remnants, very low density lipoproteins (VLDL) and intermediate density lipoproteins (IDL) but shows a preferential binding to high-density lipoproteins (HDL). It also binds a wide range of cellular receptors including the LDL receptor/LDLR, the LDL receptor-related proteins LRP1, LRP2 and LRP8 and the very low-density lipoprotein receptor/VLDLR that mediate the cellular uptake of the APOE-containing lipoprotein particles. Finally, APOE also has a heparin-binding activity and binds heparan-sulfate proteoglycans on the surface of cells, a property that supports the capture and the receptor-mediated uptake of APOE-containing lipoproteins by cells. A main function of APOE is to mediate lipoprotein clearance through the uptake of chylomicrons, VLDLs, and HDLs by hepatocytes. APOE is also involved in the biosynthesis by the liver of VLDLs as well as their uptake by peripheral tissues ensuring the delivery of triglycerides and energy storage in muscle, heart and adipose tissues. By participating in the lipoprotein-mediated distribution of lipids among tissues, APOE plays a critical role in plasma and tissues lipid homeostasis. APOE is also involved in two steps of reverse cholesterol transport, the HDLs-mediated transport of cholesterol from peripheral tissues to the liver, and thereby plays an important role in cholesterol homeostasis. First, it is functionally associated with ABCA1 in the biogenesis of HDLs in tissues. Second, it is enriched in circulating HDLs and mediates their uptake by hepatocytes. APOE also plays an important role in lipid transport in the central nervous system, regulating neuron survival and sprouting. This chain is Apolipoprotein E (Apoe), found in Grammomys surdaster (African woodland thicket rat).